Consider the following 214-residue polypeptide: Pyridoxine/pyridoxamine 5'-phosphate oxidase (214 aa).

Substrate is bound by residues R8–Y11 and K66. Residues R61–K66, F76–T77, R82, K83, and Q105 contribute to the FMN site. 3 residues coordinate substrate: Y123, R127, and S131. FMN is bound by residues Q140–S141 and W184. Position 190-192 (R190–H192) interacts with substrate. An FMN-binding site is contributed by R194.

It belongs to the pyridoxamine 5'-phosphate oxidase family. As to quaternary structure, homodimer. Requires FMN as cofactor.

It carries out the reaction pyridoxamine 5'-phosphate + O2 + H2O = pyridoxal 5'-phosphate + H2O2 + NH4(+). The catalysed reaction is pyridoxine 5'-phosphate + O2 = pyridoxal 5'-phosphate + H2O2. It functions in the pathway cofactor metabolism; pyridoxal 5'-phosphate salvage; pyridoxal 5'-phosphate from pyridoxamine 5'-phosphate: step 1/1. The protein operates within cofactor metabolism; pyridoxal 5'-phosphate salvage; pyridoxal 5'-phosphate from pyridoxine 5'-phosphate: step 1/1. Catalyzes the oxidation of either pyridoxine 5'-phosphate (PNP) or pyridoxamine 5'-phosphate (PMP) into pyridoxal 5'-phosphate (PLP). The chain is Pyridoxine/pyridoxamine 5'-phosphate oxidase from Burkholderia multivorans (strain ATCC 17616 / 249).